The following is a 461-amino-acid chain: Bifunctional enzyme LpxC/FabZ (461 aa).

The tract at residues 1–302 is UDP-3-O-acyl-N-acetylglucosamine deacetylase; that stretch reads MLKQKTLKDS…FARQMRKEIR (302 aa). H78, H260, and D264 together coordinate Zn(2+). H287 acts as the Proton donor in catalysis. The interval 303–461 is 3-hydroxyacyl-[acyl-carrier-protein] dehydratase; that stretch reads LHEIQAPTYD…EFMAQIVKNK (159 aa). H364 is an active-site residue.

The protein in the N-terminal section; belongs to the LpxC family. This sequence in the C-terminal section; belongs to the thioester dehydratase family. The cofactor is Zn(2+).

The protein localises to the cytoplasm. The enzyme catalyses a UDP-3-O-[(3R)-3-hydroxyacyl]-N-acetyl-alpha-D-glucosamine + H2O = a UDP-3-O-[(3R)-3-hydroxyacyl]-alpha-D-glucosamine + acetate. It catalyses the reaction a (3R)-hydroxyacyl-[ACP] = a (2E)-enoyl-[ACP] + H2O. Its pathway is glycolipid biosynthesis; lipid IV(A) biosynthesis; lipid IV(A) from (3R)-3-hydroxytetradecanoyl-[acyl-carrier-protein] and UDP-N-acetyl-alpha-D-glucosamine: step 2/6. In terms of biological role, catalyzes the hydrolysis of UDP-3-O-myristoyl-N-acetylglucosamine to form UDP-3-O-myristoylglucosamine and acetate, the committed step in lipid A biosynthesis. Its function is as follows. Involved in unsaturated fatty acids biosynthesis. Catalyzes the dehydration of short chain beta-hydroxyacyl-ACPs and long chain saturated and unsaturated beta-hydroxyacyl-ACPs. This chain is Bifunctional enzyme LpxC/FabZ (lpxC/fabZ), found in Bacteroides thetaiotaomicron (strain ATCC 29148 / DSM 2079 / JCM 5827 / CCUG 10774 / NCTC 10582 / VPI-5482 / E50).